The sequence spans 565 residues: MTENNQDLKQNWTRHREGVVQAACGTQLTAKSWLTEAPLRMLMNNLDPEVAENPNELVVYGGIGRAARNWECYDKIVESLTQLNDDETLLVQSGKPVGVFKTHSNAPRVLIANSNLVPHWASWEHFNELDAKGLAMYGQMTAGSWIYIGSQGIVQGTYETFVEAGRQHYDGNLKGRWVLTAGLGGMGGAQPLAATLAGACSLNIECQQSRIDFRIKTRYVDEQAADLDDALARIAKYTAEGKAISIALCGNAAEILPEMVRRGVRPDMVTDQTSAHDPLNGYLPKGWTWDEYRVRSVSEPANVVKAAKQSMAEHVEAMLAFQQAGIPTFDYGNNIRQMAKEVGVANAFDFPGFVPAYIRPLFCRGIGPFRWAALSGDPEDIYKTDAKVKELIPDDDHLHNWLDMARERISFQGLPARICWVGLGQRAKLGLAFNEMVRSGELSAPVVIGRDHLDSGSVASPNRETESMRDGSDAVSDWPLLNALLNTASGATWVSLHHGGGVGMGFSQHSGMVIVCDGTDEAAERIARVLHNDPATGVMRHADAGYDIAIDCAREQGLNLPMIGR.

NAD(+) is bound by residues 61–62, Gln139, 185–187, Glu205, Arg210, 251–252, 272–276, 282–283, and Tyr331; these read GG, GMG, NA, QTSAH, and YL. The active site involves Cys419. Residues 453–472 form a disordered region; that stretch reads LDSGSVASPNRETESMRDGS. A compositionally biased stretch (basic and acidic residues) spans 463-472; it reads RETESMRDGS. Position 501 (Gly501) interacts with NAD(+).

The protein belongs to the urocanase family. The cofactor is NAD(+).

It localises to the cytoplasm. It carries out the reaction 4-imidazolone-5-propanoate = trans-urocanate + H2O. It participates in amino-acid degradation; L-histidine degradation into L-glutamate; N-formimidoyl-L-glutamate from L-histidine: step 2/3. Its function is as follows. Catalyzes the conversion of urocanate to 4-imidazolone-5-propionate. This Pseudomonas savastanoi pv. phaseolicola (strain 1448A / Race 6) (Pseudomonas syringae pv. phaseolicola (strain 1448A / Race 6)) protein is Urocanate hydratase.